Here is a 107-residue protein sequence, read N- to C-terminus: uncharacterized protein (107 aa).

Residues 6 to 107 (KKVIEQILDN…QAQVETLLAA (102 aa)) enclose the Glutaredoxin domain. Glutathione is bound at residue Lys23. Cys31 serves as a coordination point for [2Fe-2S] cluster. Residues Arg60 and 85–86 (AD) each bind glutathione.

Belongs to the glutaredoxin family. Monothiol subfamily.

Its subcellular location is the plastid. The protein resides in the chloroplast. This is an uncharacterized protein from Porphyra purpurea (Red seaweed).